Reading from the N-terminus, the 416-residue chain is Probable intermembrane transport protein HI_1671 (416 aa).

8 consecutive transmembrane segments (helical) span residues 62–82 (ILILMPFSLNYPLLSLHLLGI), 107–127 (IFICAVVMPITFALLVIMLWL), 138–158 (VLLFLGYIKAWVMFDVYLVAL), 172–192 (EINIYLIPFIFTALLTTLLFI), 263–283 (LIAGIIMLFPANLLPISGIYL), 306–326 (FVAFVVFFASIFVPISKIFIM), 347–367 (LLHLVHFVGRWSMLDLFVLAL), and 377–397 (IINFTVGPGAFYFGAAVFCTM).

Belongs to the PqiA family.

The protein localises to the cell inner membrane. The polypeptide is Probable intermembrane transport protein HI_1671 (Haemophilus influenzae (strain ATCC 51907 / DSM 11121 / KW20 / Rd)).